Reading from the N-terminus, the 183-residue chain is Phosphinothricin N-acetyltransferase (183 aa).

The N-acetyltransferase domain occupies 8–169 (VEIRPATAAD…DVGFWQRDFE (162 aa)). Acetyl-CoA is bound by residues 91–93 (VYV), 99–104 (RLGLGS), and Asn-130.

It belongs to the acetyltransferase family. PAT/BAR subfamily.

It catalyses the reaction phosphinothricin + acetyl-CoA = N-acetylphosphinothricin + CoA + H(+). Inactivates phosphinothricin (PPT) by transfer of an acetyl group from acetyl CoA. This enzyme is an effector of phosphinothricin tripeptide (PTT or bialaphos) resistance. In Streptomyces viridochromogenes (strain DSM 40736 / JCM 4977 / BCRC 1201 / Tue 494), this protein is Phosphinothricin N-acetyltransferase.